Consider the following 488-residue polypeptide: Ribulose bisphosphate carboxylase large chain (488 aa).

Substrate-binding residues include Asn128 and Thr178. Lys180 functions as the Proton acceptor in the catalytic mechanism. Residue Lys182 participates in substrate binding. Residues Lys206, Asp208, and Glu209 each coordinate Mg(2+). An N6-carboxylysine modification is found at Lys206. His298 serves as the catalytic Proton acceptor. Substrate is bound by residues Arg299, His331, and Ser383.

The protein belongs to the RuBisCO large chain family. Type I subfamily. In terms of assembly, heterohexadecamer of 8 large chains and 8 small chains. It depends on Mg(2+) as a cofactor.

The catalysed reaction is 2 (2R)-3-phosphoglycerate + 2 H(+) = D-ribulose 1,5-bisphosphate + CO2 + H2O. It catalyses the reaction D-ribulose 1,5-bisphosphate + O2 = 2-phosphoglycolate + (2R)-3-phosphoglycerate + 2 H(+). Functionally, ruBisCO catalyzes two reactions: the carboxylation of D-ribulose 1,5-bisphosphate, the primary event in carbon dioxide fixation, as well as the oxidative fragmentation of the pentose substrate. Both reactions occur simultaneously and in competition at the same active site. The protein is Ribulose bisphosphate carboxylase large chain of Variovorax paradoxus (strain S110).